Reading from the N-terminus, the 363-residue chain is MGNIHIQTKSKEYDVYVGKESLSHLTTIVQNMQPAVSNIMIISDEAVASLHLQTVVDALQIDQKVFSFVVPSGEKEKSFENFYAAHTSALENKLDRNSLIVALGGGMIGDLAGFVAASFMRGIRFVQVPTTLLAHDSAVGGKVAINHPLGKNMIGAFHQPEAVVYHTPFLQSLPEKEWRSGYAEVIKHALIGDVKLYHWLKEEVQTLADLRDEKLIHILTKAIPVKANIVAQDETEKGVRAHLNFGHTLGHALEKELGYGNITHGDGVAVGMLFAIFLSEQVYKVNLAYEEMKQWFLKYGYPKMPSDLSVERLVGLMKQDKKANAGTIHMVLMQEYGVVNVVSIPDETVHIALEAFQKDMVEK.

NAD(+) is bound by residues S72 to K77, T130 to T131, K142, and K151. The Zn(2+) site is built by E184, H247, and H264.

Belongs to the sugar phosphate cyclases superfamily. Dehydroquinate synthase family. Co(2+) serves as cofactor. Zn(2+) is required as a cofactor. It depends on NAD(+) as a cofactor.

It localises to the cytoplasm. The enzyme catalyses 7-phospho-2-dehydro-3-deoxy-D-arabino-heptonate = 3-dehydroquinate + phosphate. Its pathway is metabolic intermediate biosynthesis; chorismate biosynthesis; chorismate from D-erythrose 4-phosphate and phosphoenolpyruvate: step 2/7. In terms of biological role, catalyzes the conversion of 3-deoxy-D-arabino-heptulosonate 7-phosphate (DAHP) to dehydroquinate (DHQ). This chain is 3-dehydroquinate synthase, found in Bacillus thuringiensis subsp. konkukian (strain 97-27).